We begin with the raw amino-acid sequence, 284 residues long: Cuticle collagen dpy-5 (284 aa).

Residues 88–284 (GLPSQGCPAG…PCPERKRRRV (197 aa)) form a disordered region. 2 triple-helical region regions span residues 94–126 (CPAG…PGLN) and 143–270 (GPPG…VGAD). Residues 106–115 (GEPGGTGPDG) show a composition bias toward gly residues. The span at 163–177 (AGKRGTPGKDGEPGR) shows a compositional bias: basic and acidic residues. Composition is skewed to low complexity over residues 181-193 (IGDQ…DGQP), 224-246 (EPGN…TGQP), and 255-271 (DGTP…GADA).

This sequence belongs to the cuticular collagen family. In terms of assembly, collagen polypeptide chains are complexed within the cuticle by disulfide bonds and other types of covalent cross-links. In terms of processing, may be a substrate of bli-4.

Functionally, nematode cuticles are composed largely of collagen-like proteins. The cuticle functions both as an exoskeleton and as a barrier to protect the worm from its environment. The polypeptide is Cuticle collagen dpy-5 (dpy-5) (Caenorhabditis elegans).